The primary structure comprises 623 residues: Chaperone protein HtpG (623 aa).

The tract at residues 1–336 is a; substrate-binding; that stretch reads MSETNTQKAA…TEDLPLNVSR (336 aa). A b region spans residues 337–546; the sequence is EMLQATPVLA…DGGPDLTMQR (210 aa). The tract at residues 547–623 is c; the sequence is LMRRSGQAMP…ATLLAGPAAE (77 aa).

It belongs to the heat shock protein 90 family. Homodimer.

It is found in the cytoplasm. Its function is as follows. Molecular chaperone. Has ATPase activity. The sequence is that of Chaperone protein HtpG from Gluconobacter oxydans (strain 621H) (Gluconobacter suboxydans).